The chain runs to 365 residues: Peptide chain release factor 2 (365 aa).

Gln-252 carries the post-translational modification N5-methylglutamine.

The protein belongs to the prokaryotic/mitochondrial release factor family. Post-translationally, methylated by PrmC. Methylation increases the termination efficiency of RF2.

The protein resides in the cytoplasm. Peptide chain release factor 2 directs the termination of translation in response to the peptide chain termination codons UGA and UAA. This Aliivibrio fischeri (strain ATCC 700601 / ES114) (Vibrio fischeri) protein is Peptide chain release factor 2.